The primary structure comprises 797 residues: Hid-1 family protein P27G11.12 (797 aa).

It belongs to the hid-1 family.

The protein localises to the cytoplasm. Its subcellular location is the nucleus. The sequence is that of Hid-1 family protein P27G11.12 from Schizosaccharomyces pombe (strain 972 / ATCC 24843) (Fission yeast).